The following is a 175-amino-acid chain: B9 domain-containing protein 2 (175 aa).

In terms of domain architecture, C2 B9-type spans 2–118 (AELHIIGQII…QCVTWRPLGS (117 aa)).

The protein belongs to the B9D family. In terms of assembly, part of the tectonic-like complex (also named B9 complex).

It is found in the cytoplasm. The protein resides in the cytoskeleton. Its subcellular location is the cilium basal body. The protein localises to the cilium axoneme. Component of the tectonic-like complex, a complex localized at the transition zone of primary cilia and acting as a barrier that prevents diffusion of transmembrane proteins between the cilia and plasma membranes. This chain is B9 domain-containing protein 2 (b9d2), found in Danio rerio (Zebrafish).